Reading from the N-terminus, the 1096-residue chain is Pullulanase (1096 aa).

The N-terminal stretch at 1–19 (MLRYTCHALFLGSLVLLSG) is a signal peptide. Cysteine 20 carries the N-palmitoyl cysteine lipid modification. Residue cysteine 20 is the site of S-diacylglycerol cysteine attachment. A compositionally biased stretch (low complexity) spans 24 to 34 (SSSSTSGSPGS). The segment at 24–50 (SSSSTSGSPGSPGNPGNPGTPGTPDPQ) is disordered. The Nucleophile role is filled by aspartate 694. The active-site Proton donor is the glutamate 723. The interval 1014–1044 (QAGRQSGQPCRRHRGGDQRRAGKPDAAGLRR) is disordered.

The protein belongs to the glycosyl hydrolase 13 family. As to quaternary structure, homotrimer.

The protein localises to the cell membrane. The enzyme catalyses Hydrolysis of (1-&gt;6)-alpha-D-glucosidic linkages in pullulan, amylopectin and glycogen, and in the alpha- and beta-limit dextrins of amylopectin and glycogen.. In Klebsiella aerogenes (Enterobacter aerogenes), this protein is Pullulanase (pulA).